The primary structure comprises 338 residues: Heat-inducible transcription repressor HrcA (338 aa).

This sequence belongs to the HrcA family.

In terms of biological role, negative regulator of class I heat shock genes (grpE-dnaK-dnaJ and groELS operons). Prevents heat-shock induction of these operons. This chain is Heat-inducible transcription repressor HrcA, found in Streptomyces albus G.